Reading from the N-terminus, the 2440-residue chain is Nuclear receptor corepressor 1 (2440 aa).

Polar residues predominate over residues 1 to 18 (MSSSGYPPNQGAFSTEQS). 2 disordered regions span residues 1 to 177 (MSSS…SKLS) and 206 to 231 (QQQL…VEQK). Positions 1–373 (MSSSGYPPNQ…QRGAGLSATI (373 aa)) are interaction with ZBTB33 and HEXIM1. Over residues 51–64 (SQASQLLQQQQQQQ) the composition is skewed to low complexity. Basic and acidic residues-rich tracts occupy residues 77–88 (PGSDRPQERRTS), 99–119 (VDHD…DSHF), and 141–155 (ADAK…KHEA). Position 172 is a phosphoserine (Ser172). Residues 174 to 216 (SKLSKEELIQSMDRVDREIAKVEQQILKLKKKQQQLEEEAAKP) are a coiled coil. Positions 212 to 221 (EAAKPPEPEK) are enriched in basic and acidic residues. Position 224 is a phosphoserine (Ser224). An interaction with SIN3A/B region spans residues 254-312 (FEGLGPKVELPLYNQPSDTKVYHENIKTNQVMRKKLILFFKRRNHARKQREQKICQRYD). Positions 299–328 (ARKQREQKICQRYDQLMEAWEKKVDRIENN) form a coiled coil. The SANT 1 domain maps to 435 to 486 (QFMNVWTDHEKEIFKDKFIQHPKNFGLIASYLERKSVPDCVLYYYLTKKNEN). Disordered stretches follow at residues 497-632 (KRRG…TEEE) and 677-915 (NLLQ…GSIL). A coiled-coil region spans residues 501–557 (RNQQIARPSQEEKVEEKEEDKAEKTEKKEEEKKDEEEKDEKEDSKENTKEKDKIDGT). Basic and acidic residues-rich tracts occupy residues 509 to 531 (SQEE…KEEE) and 541 to 556 (KEDS…KIDG). Residues 592–605 (EAAAASAAAAAATE) show a composition bias toward low complexity. Residues 606–617 (EPPPPLPPPPEP) show a composition bias toward pro residues. In terms of domain architecture, SANT 2 spans 623 to 674 (VETSRWTEEEMEVAKKGLVEHGRNWAAIAKMVGTKSEAQCKNFYFNYKRRHN). A compositionally biased stretch (polar residues) spans 698-708 (QCESVASTVSA). Residues 709–728 (QEDEDIEASNEEENPEDSEV) show a composition bias toward acidic residues. A compositionally biased stretch (low complexity) spans 752 to 768 (ELEPTTETAPSTSPSLA). The span at 781 to 792 (ETQVNDSISAET) shows a compositional bias: polar residues. Positions 820–859 (DSVDVEVRVPENHASKVEGDNTKERDLDRASEKVEPRDED) are enriched in basic and acidic residues. Composition is skewed to polar residues over residues 864 to 883 (QQIN…SATC) and 906 to 915 (SLLNPTGSIL). The interaction with ETO stretch occupies residues 988–1816 (RSSTSPCGTS…QGLPASRYNT (829 aa)). A Phosphoserine modification is found at Ser999. The interval 1022 to 1046 (VRLPTTRPTRPPPPLIPSSKTTVAS) is disordered. Lys1106 participates in a covalent cross-link: Glycyl lysine isopeptide (Lys-Gly) (interchain with G-Cter in SUMO1); alternate. Lys1106 is covalently cross-linked (Glycyl lysine isopeptide (Lys-Gly) (interchain with G-Cter in SUMO2); alternate). A Phosphoserine modification is found at Ser1111. Lys1184 participates in a covalent cross-link: Glycyl lysine isopeptide (Lys-Gly) (interchain with G-Cter in SUMO2). The tract at residues 1184-1204 (KGSISRMPIEDSSPEKGREEA) is disordered. Ser1195, Ser1196, Ser1249, Ser1263, Ser1281, and Ser1322 each carry phosphoserine. The residue at position 1336 (Lys1336) is an N6-acetyllysine. At Thr1367 the chain carries Phosphothreonine. Lys1389 is covalently cross-linked (Glycyl lysine isopeptide (Lys-Gly) (interchain with G-Cter in SUMO2)). A Glycyl lysine isopeptide (Lys-Gly) (interchain with G-Cter in SUMO2); alternate cross-link involves residue Lys1412. An N6-acetyllysine; alternate modification is found at Lys1412. Positions 1440-1459 (AGETVRSRHTSVVSSGPSVL) are disordered. Residues Ser1450 and Ser1472 each carry the phosphoserine modification. Residues 1488–1512 (YQNTMSRGSPMMNRTSDVTISSNKS) are compositionally biased toward polar residues. The disordered stretch occupies residues 1488 to 1554 (YQNTMSRGSP…SPFDPHHRGS (67 aa)). The segment at 1501–2440 (RTSDVTISSN…QYETLSDSDD (940 aa)) is interaction with C1D. Residue Lys1518 forms a Glycyl lysine isopeptide (Lys-Gly) (interchain with G-Cter in SUMO2) linkage. Ser1592 carries the phosphoserine modification. Disordered regions lie at residues 1690-1759 (PRPY…SPSP) and 1884-1922 (SSAF…LRTR). Basic and acidic residues-rich tracts occupy residues 1712-1729 (AERE…RERI) and 1903-1921 (AGKD…ELRT). Positions 1933–1937 (IDVII) match the CORNR box 1 motif. The disordered stretch occupies residues 1943 to 1969 (SDKDARERGSQSSDSSSSLSSHRYETP). The span at 1952–1963 (SQSSDSSSSLSS) shows a compositional bias: low complexity. Phosphoserine occurs at positions 1977 and 1981. The interval 2006–2041 (PTRQYEGPLHHYRPQQESPSPQQQLPPSSQAEGMGQ) is disordered. A compositionally biased stretch (low complexity) spans 2020–2035 (QQESPSPQQQLPPSSQ). Residues 2032–2115 (PSSQAEGMGQ…QAQSVHHQRP (84 aa)) form an ID1 region. The tract at residues 2047–2050 (RLIT) is required for interaction with RARA in the absence of its ligand. Residues 2055–2059 (ICQII) carry the CORNR box 2 motif. Low complexity predominate over residues 2067-2086 (QVSSQTPQQPPTSTFQNSPS). A disordered region spans residues 2067–2155 (QVSSQTPQQP…PYEPISPPQV (89 aa)). Residues 2087–2110 (ALVSTPVRTKTSNRYSPESQAQSV) show a composition bias toward polar residues. Phosphoserine occurs at positions 2102, 2120, 2136, 2151, and 2184. The segment covering 2124–2142 (LVDKSRGSRPGKSPERSHV) has biased composition (basic and acidic residues). Positions 2212 to 2273 (IFRKLNSSGG…EDIIRKALMG (62 aa)) are ID2. A CORNR box 3 motif is present at residues 2263 to 2267 (LEDII). Residues 2287 to 2440 (SQPMGVVPGT…QYETLSDSDD (154 aa)) are disordered. A compositionally biased stretch (polar residues) spans 2296–2305 (TANTSVVTSG). Thr2399 carries the phosphothreonine modification. Composition is skewed to polar residues over residues 2407–2418 (AVNQAAPHQQNR) and 2431–2440 (QYETLSDSDD). 2 positions are modified to phosphoserine: Ser2436 and Ser2438.

It belongs to the N-CoR nuclear receptor corepressors family. As to quaternary structure, forms a large corepressor complex that contains SIN3A/B and histone deacetylases HDAC1 and HDAC2. This complex associates with the thyroid receptor (TR) and the retinoid acid receptor (RAR) in the absence of ligand. Interacts directly with RARA; the interaction is facilitated with RARA trimethylation. Component of the N-Cor repressor complex, at least composed of CBFA2T3, HEXIM1, NCOR1, NCOR2, HDAC3, TBL1X, TBL1XR1, CORO2A and GPS2. Interacts with ZBTB33; the interaction serves to recruit the N-CoR complex to promoter regions containing methylated CpG dinucleotides. Interacts with TRIM28 and KDM3A. Interacts (via the RD1 domain) with BAZ1A (via its N-terminal); the interaction corepresses a number of NCOR1-regulated genes. Interacts with BCL6, C1D, DACH1, HEXIM1, HDAC7, RORA, RORC, SAP30, SIAH2, SIN3A and SIN3B. May interact with DEAF1. Interacts with RXRA. Interacts with SETD5. Interacts with VDR. Interacts with ZBTB7A. Interacts with AR. Interacts with HDAC3. In terms of processing, ubiquitinated; mediated by SIAH2 and leading to its subsequent proteasomal degradation.

The protein resides in the nucleus. In terms of biological role, mediates transcriptional repression by certain nuclear receptors. Part of a complex which promotes histone deacetylation and the formation of repressive chromatin structures which may impede the access of basal transcription factors. Participates in the transcriptional repressor activity produced by BCL6. Recruited by ZBTB7A to the androgen response elements/ARE on target genes, negatively regulates androgen receptor signaling and androgen-induced cell proliferation. Mediates the NR1D1-dependent repression and circadian regulation of TSHB expression. The NCOR1-HDAC3 complex regulates the circadian expression of the core clock gene ARTNL/BMAL1 and the genes involved in lipid metabolism in the liver. This Homo sapiens (Human) protein is Nuclear receptor corepressor 1 (NCOR1).